The primary structure comprises 183 residues: Ribosome maturation factor RimM (183 aa).

Residues 102–183 (DDDFYWHQLE…CITVDWDPEF (82 aa)) enclose the PRC barrel domain.

The protein belongs to the RimM family. In terms of assembly, binds ribosomal protein uS19.

Its subcellular location is the cytoplasm. Its function is as follows. An accessory protein needed during the final step in the assembly of 30S ribosomal subunit, possibly for assembly of the head region. Essential for efficient processing of 16S rRNA. May be needed both before and after RbfA during the maturation of 16S rRNA. It has affinity for free ribosomal 30S subunits but not for 70S ribosomes. This chain is Ribosome maturation factor RimM, found in Saccharophagus degradans (strain 2-40 / ATCC 43961 / DSM 17024).